The following is a 456-amino-acid chain: Armadillo repeat-containing X-linked protein 1 (456 aa).

Topologically, residues 1–6 are mitochondrial intermembrane; it reads MGRTRE. Mitochondrion outer membrane (MOM)-targeting sequence regions lie at residues 1 to 6 and 26 to 36; these read MGRTRE and RLTWGKDENEK. The chain crosses the membrane as a helical; Signal-anchor span at residues 7-29; it reads AGCVAAGMVIGAGACYCVYRLTW. Over 30–456 the chain is Cytoplasmic; that stretch reads GKDENEKLWD…VKVLKVLTKL (427 aa). 2 disordered regions span residues 37–106 and 139–186; these read LWDE…SGGG and RTLT…APAT. The segment covering 38–50 has biased composition (acidic residues); that stretch reads WDEEEEEEEEEEE. Basic and acidic residues-rich tracts occupy residues 51 to 62 and 72 to 81; these read KSCSDKTEKELK and KPQDDSKSKV. A compositionally biased stretch (basic residues) spans 162-180; the sequence is SRARNRTSGKVKRKNRSKS. ARM repeat units lie at residues 198 to 238, 240 to 279, 361 to 401, and 418 to 456; these read PYKI…NNAA, SFNQNAIRELGGVPIIAKLIKTRDPIIREKTYNALNNLSV, PAMT…NIND, and SSLFFLFKESGVCVKKIKALASHKDLVVKVKVLKVLTKL.

Belongs to the eutherian X-chromosome-specific Armcx family. As to quaternary structure, interacts with MIRO1. As to expression, widely expressed in the adult nervous tissue, especially in the forebrain, including the cerebral cortex, hippocampus and thalamus.

It localises to the mitochondrion. The protein localises to the mitochondrion outer membrane. Functionally, regulates mitochondrial transport during axon regeneration. Increases the proportion of motile mitochondria by recruiting stationary mitochondria into the motile pool. Enhances mitochondria movement and neurite growth in both adult axons and embryonic neurons. Promotes neuronal survival and axon regeneration after nerve injury. May link mitochondria to the Trak1-kinesin motor complex via its interaction with Miro1. This chain is Armadillo repeat-containing X-linked protein 1 (Armcx1), found in Mus musculus (Mouse).